A 332-amino-acid polypeptide reads, in one-letter code: Ribose-phosphate pyrophosphokinase (332 aa).

Residues 43 to 45 (DGE) and 102 to 103 (RQ) contribute to the ATP site. Mg(2+)-binding residues include His-136 and Asp-176. The active site involves Lys-199. Residues Arg-201, Asp-225, and 229-233 (DTGGT) contribute to the D-ribose 5-phosphate site.

The protein belongs to the ribose-phosphate pyrophosphokinase family. Class I subfamily. In terms of assembly, homohexamer. It depends on Mg(2+) as a cofactor.

The protein localises to the cytoplasm. It carries out the reaction D-ribose 5-phosphate + ATP = 5-phospho-alpha-D-ribose 1-diphosphate + AMP + H(+). Its pathway is metabolic intermediate biosynthesis; 5-phospho-alpha-D-ribose 1-diphosphate biosynthesis; 5-phospho-alpha-D-ribose 1-diphosphate from D-ribose 5-phosphate (route I): step 1/1. In terms of biological role, involved in the biosynthesis of the central metabolite phospho-alpha-D-ribosyl-1-pyrophosphate (PRPP) via the transfer of pyrophosphoryl group from ATP to 1-hydroxyl of ribose-5-phosphate (Rib-5-P). In Mycoplasma genitalium (strain ATCC 33530 / DSM 19775 / NCTC 10195 / G37) (Mycoplasmoides genitalium), this protein is Ribose-phosphate pyrophosphokinase.